The sequence spans 308 residues: MANRRQPVQHRAQQRVYRQSQIRYAPGAGGESEISCCVKYSVFSFNVIFFLLGFGLLLFGVWAQIEKNTFVNMLSKASKLYLDPTWPLLIVGFLTFIIGFSGCVGSLRENTSFLTFYSTLLGLLLIAEFSAGVFAYACRDQLDNYIRNLLNDVVVGYRDDPDLQLLIDSMQETWMCCGINGADDWDRNTYFSIEAREVASPEAGGVPFSCCINSSKLEFKNYFCGHGVRLKPESHMAAHLAAQRVMAHTASIYTEGCLPKLQLWLNNNMLLVAVSMVIIAIIQVLGICFAQNLKSDILAQRAKWYYTH.

Topologically, residues 1 to 41 (MANRRQPVQHRAQQRVYRQSQIRYAPGAGGESEISCCVKYS) are cytoplasmic. Residues 42–62 (VFSFNVIFFLLGFGLLLFGVW) form a helical membrane-spanning segment. Residues 63–86 (AQIEKNTFVNMLSKASKLYLDPTW) are Extracellular-facing. Residues 87-107 (PLLIVGFLTFIIGFSGCVGSL) traverse the membrane as a helical segment. At 108–112 (RENTS) the chain is on the cytoplasmic side. Residues 113-133 (FLTFYSTLLGLLLIAEFSAGV) form a helical membrane-spanning segment. Residues 134 to 268 (FAYACRDQLD…PKLQLWLNNN (135 aa)) lie on the Extracellular side of the membrane. A glycan (N-linked (GlcNAc...) asparagine) is linked at Asn-213. Residues 269-289 (MLLVAVSMVIIAIIQVLGICF) form a helical membrane-spanning segment. At 290–308 (AQNLKSDILAQRAKWYYTH) the chain is on the cytoplasmic side.

Belongs to the tetraspanin (TM4SF) family. As to quaternary structure, may interact with protease sup-17; the interaction promotes sup-17 cell membrane localization. As to expression, expressed in the germline.

Its subcellular location is the cell membrane. The protein localises to the cytoplasmic vesicle membrane. The protein resides in the endosome membrane. It is found in the early endosome membrane. It localises to the late endosome membrane. Its subcellular location is the recycling endosome membrane. The protein localises to the golgi apparatus. The protein resides in the trans-Golgi network membrane. Functionally, functions redundantly with tsp-14 isoform a to regulate body size, embryonic and vulva development. Functions redundantly with tsp-14 (isoforms a and b) to regulate cell fate specification in the postembryonic mesodermal M lineage and male development. May regulate BMP-like Sma/Mab signaling by mediating protease sup-17 trafficking to the cell surface. Together with tsp-14, functions redundantly to maintain cell surface levels of the BMP type II receptor daf-4 (but not BMP type I receptor sma-6), probably by regulating endosomal sorting of receptors and their targeting to degradative lysosomes. Together with tsp-14 involved in maintaining the structural and functional integrity of the endosomal network. Together with tsp-14, probably acts by modulating the activation of glp-1, a Notch-like receptor, to regulate germline maturation. Probably acts by modulating the activation of lin-12, a Notch-like receptor, to regulate cell fate specification such as the anchor cell/ventral uterine precursor cell decision. This chain is Tetraspanin-12, found in Caenorhabditis elegans.